Consider the following 882-residue polypeptide: Pyruvate dehydrogenase E1 component (882 aa).

As to quaternary structure, homodimer. Part of the PDH complex, consisting of multiple copies of pyruvate dehydrogenase (E1), dihydrolipoamide acetyltransferase (E2) and lipoamide dehydrogenase (E3). Thiamine diphosphate is required as a cofactor.

It catalyses the reaction N(6)-[(R)-lipoyl]-L-lysyl-[protein] + pyruvate + H(+) = N(6)-[(R)-S(8)-acetyldihydrolipoyl]-L-lysyl-[protein] + CO2. Its function is as follows. Component of the pyruvate dehydrogenase (PDH) complex, that catalyzes the overall conversion of pyruvate to acetyl-CoA and CO(2). The chain is Pyruvate dehydrogenase E1 component (aceE) from Pseudomonas aeruginosa (strain ATCC 15692 / DSM 22644 / CIP 104116 / JCM 14847 / LMG 12228 / 1C / PRS 101 / PAO1).